A 389-amino-acid polypeptide reads, in one-letter code: Succinate--CoA ligase [ADP-forming] subunit beta (389 aa).

The ATP-grasp domain occupies 9 to 244 (KQILRKYGIP…PSQMSNNEAR (236 aa)). ATP-binding positions include K46, 53 to 55 (GRG), I102, and E107. Mg(2+) is bound by residues N199 and D213. Substrate contacts are provided by residues N264 and 321 to 323 (GIM).

The protein belongs to the succinate/malate CoA ligase beta subunit family. Heterotetramer of two alpha and two beta subunits. Requires Mg(2+) as cofactor.

It catalyses the reaction succinate + ATP + CoA = succinyl-CoA + ADP + phosphate. The enzyme catalyses GTP + succinate + CoA = succinyl-CoA + GDP + phosphate. It functions in the pathway carbohydrate metabolism; tricarboxylic acid cycle; succinate from succinyl-CoA (ligase route): step 1/1. Functionally, succinyl-CoA synthetase functions in the citric acid cycle (TCA), coupling the hydrolysis of succinyl-CoA to the synthesis of either ATP or GTP and thus represents the only step of substrate-level phosphorylation in the TCA. The beta subunit provides nucleotide specificity of the enzyme and binds the substrate succinate, while the binding sites for coenzyme A and phosphate are found in the alpha subunit. This chain is Succinate--CoA ligase [ADP-forming] subunit beta, found in Protochlamydia amoebophila (strain UWE25).